Here is a 221-residue protein sequence, read N- to C-terminus: 2-amino-5-formylamino-6-ribosylaminopyrimidin-4(3H)-one 5'-monophosphate deformylase (221 aa).

Fe cation contacts are provided by Glu29, His31, Asp40, and His108.

The protein belongs to the creatininase superfamily. FAPy deformylase family. Homodimer. Requires Fe(2+) as cofactor. Zn(2+) is required as a cofactor.

The enzyme catalyses 2-amino-5-formylamino-6-(5-phospho-D-ribosylamino)pyrimidin-4(3H)-one + H2O = 2,5-diamino-6-(1-D-ribosylamino)pyrimidin-4(3H)-one 5'-phosphate + formate + H(+). The protein operates within cofactor biosynthesis; coenzyme F420 biosynthesis. Its pathway is cofactor biosynthesis; riboflavin biosynthesis. Functionally, catalyzes the hydrolysis of the formamide of 2-amino-5-formylamino-6-ribosylamino-4(3H)-pyrimidinone 5'-monophosphate (FAPy) to form 2,5-diamino-6-ribosylamino-4(3H)-pyrimidinone 5'-phosphate (APy). The sequence is that of 2-amino-5-formylamino-6-ribosylaminopyrimidin-4(3H)-one 5'-monophosphate deformylase from Methanococcus maripaludis (strain DSM 14266 / JCM 13030 / NBRC 101832 / S2 / LL).